A 370-amino-acid chain; its full sequence is Histidinol-phosphate aminotransferase (370 aa).

N6-(pyridoxal phosphate)lysine is present on K220.

The protein belongs to the class-II pyridoxal-phosphate-dependent aminotransferase family. Histidinol-phosphate aminotransferase subfamily. In terms of assembly, homodimer. The cofactor is pyridoxal 5'-phosphate.

It catalyses the reaction L-histidinol phosphate + 2-oxoglutarate = 3-(imidazol-4-yl)-2-oxopropyl phosphate + L-glutamate. Its pathway is amino-acid biosynthesis; L-histidine biosynthesis; L-histidine from 5-phospho-alpha-D-ribose 1-diphosphate: step 7/9. The polypeptide is Histidinol-phosphate aminotransferase (Granulibacter bethesdensis (strain ATCC BAA-1260 / CGDNIH1)).